The following is a 689-amino-acid chain: Glycine--tRNA ligase beta subunit (689 aa).

The protein belongs to the class-II aminoacyl-tRNA synthetase family. Tetramer of two alpha and two beta subunits.

It is found in the cytoplasm. It catalyses the reaction tRNA(Gly) + glycine + ATP = glycyl-tRNA(Gly) + AMP + diphosphate. The sequence is that of Glycine--tRNA ligase beta subunit from Escherichia coli (strain K12 / MC4100 / BW2952).